Consider the following 300-residue polypeptide: Free fatty acid receptor 1 (300 aa).

At 1–8 the chain is on the extracellular side; sequence MDLPPQLS. The helical transmembrane segment at 9–31 threads the bilayer; the sequence is FALYVSAFALGFPLNLLAIRGAV. Residues 32 to 41 are Cytoplasmic-facing; that stretch reads SHAKLRLTPS. Residues 42-64 traverse the membrane as a helical segment; sequence LVYTLHLGCSDLLLAITLPLKAV. Residues 65–79 are Extracellular-facing; sequence EALASGAWPLPLPFC. An intrachain disulfide couples Cys79 to Cys170. The chain crosses the membrane as a helical span at residues 80 to 101; that stretch reads PVFALAHFAPLYAGGGFLAALS. Over 102–121 the chain is Cytoplasmic; sequence AGRYLGAAFPFGYQAIRRPR. The helical transmembrane segment at 122–142 threads the bilayer; that stretch reads YSWGVCVAIWALVLCHLGLAL. Topologically, residues 143–178 are extracellular; sequence GLETSGSWLDNSTSSLGINIPVNGSPVCLEAWDPDS. N-linked (GlcNAc...) asparagine glycosylation is present at Asn153. The helical transmembrane segment at 179 to 200 threads the bilayer; the sequence is ARPARLSFSILLFFLPLVITAF. The Cytoplasmic segment spans residues 201-223; sequence CYVGCLRALVRSGLSHKRKLRAA. A helical transmembrane segment spans residues 224–248; sequence WVAGGALLTLLLCLGPYNASNVASF. At 249-256 the chain is on the extracellular side; that stretch reads INPDLGGS. Residues 257–279 traverse the membrane as a helical segment; the sequence is WRKLGLITGAWSVVLNPLVTGYL. The Cytoplasmic segment spans residues 280–300; sequence GTGPGRGTICVTRTQRGTIQK.

Belongs to the G-protein coupled receptor 1 family. Expressed in pancreatic islet beta cells (at protein level). Expressed in pancreatic islet beta cells.

The protein resides in the cell membrane. Is also activated by synthetic agonists, such as AM-8182, AM-6331 and TAK-875 (fasiglifam). AM-8182 is a full agonist, while AM-6331 and TAK-875 (fasiglifam) are partial agonists that potentiate the activity of the endogenous ligands, such as alpha-linolenic acid and gamma-linolenic acid. Its function is as follows. G-protein coupled receptor for medium and long chain saturated and unsaturated fatty acids that plays an important role in glucose homeostasis. Fatty acid binding increases glucose-stimulated insulin secretion, and may also enhance the secretion of glucagon-like peptide 1 (GLP-1). May also play a role in bone homeostasis; receptor signaling activates pathways that inhibit osteoclast differentiation. Ligand binding leads to a conformation change that triggers signaling via G-proteins that activate phospholipase C, leading to an increase of the intracellular calcium concentration. Seems to act through a G(q) and G(i)-mediated pathway. Mediates the anti-inflammatory effects of omega-3 polyunsaturated fatty acids (PUFAs) via inhibition of NLRP3 inflammasome activation. The sequence is that of Free fatty acid receptor 1 (Ffar1) from Mus musculus (Mouse).